A 161-amino-acid polypeptide reads, in one-letter code: 2-C-methyl-D-erythritol 2,4-cyclodiphosphate synthase (161 aa).

Residues D10 and H12 each contribute to the a divalent metal cation site. 4-CDP-2-C-methyl-D-erythritol 2-phosphate is bound by residues 10 to 12 and 36 to 37; these read DVH and HS. H44 lines the a divalent metal cation pocket. Residues 58-60, 63-67, 102-108, 134-137, F141, and R144 each bind 4-CDP-2-C-methyl-D-erythritol 2-phosphate; these read DIG, FPDTD, AQAPKMA, and TTTE.

Belongs to the IspF family. Homotrimer. A divalent metal cation serves as cofactor.

It carries out the reaction 4-CDP-2-C-methyl-D-erythritol 2-phosphate = 2-C-methyl-D-erythritol 2,4-cyclic diphosphate + CMP. Its pathway is isoprenoid biosynthesis; isopentenyl diphosphate biosynthesis via DXP pathway; isopentenyl diphosphate from 1-deoxy-D-xylulose 5-phosphate: step 4/6. Involved in the biosynthesis of isopentenyl diphosphate (IPP) and dimethylallyl diphosphate (DMAPP), two major building blocks of isoprenoid compounds. Catalyzes the conversion of 4-diphosphocytidyl-2-C-methyl-D-erythritol 2-phosphate (CDP-ME2P) to 2-C-methyl-D-erythritol 2,4-cyclodiphosphate (ME-CPP) with a corresponding release of cytidine 5-monophosphate (CMP). The sequence is that of 2-C-methyl-D-erythritol 2,4-cyclodiphosphate synthase from Shewanella sediminis (strain HAW-EB3).